The following is a 139-amino-acid chain: Arsenate reductase (139 aa).

Catalysis depends on nucleophile residues cysteine 10, cysteine 82, and cysteine 89. Disulfide bonds link cysteine 10/cysteine 82 and cysteine 82/cysteine 89.

This sequence belongs to the low molecular weight phosphotyrosine protein phosphatase family. Thioredoxin-coupled ArsC subfamily.

Its subcellular location is the cytoplasm. It carries out the reaction arsenate + [thioredoxin]-dithiol + H(+) = arsenite + [thioredoxin]-disulfide + H2O. Catalyzes the reduction of arsenate [As(V)] to arsenite [As(III)]. The protein is Arsenate reductase of Bacillus licheniformis (strain ATCC 14580 / DSM 13 / JCM 2505 / CCUG 7422 / NBRC 12200 / NCIMB 9375 / NCTC 10341 / NRRL NRS-1264 / Gibson 46).